A 149-amino-acid chain; its full sequence is UPF0178 protein VC0395_A0405/VC395_0897 (149 aa).

The protein belongs to the UPF0178 family.

The sequence is that of UPF0178 protein VC0395_A0405/VC395_0897 from Vibrio cholerae serotype O1 (strain ATCC 39541 / Classical Ogawa 395 / O395).